Here is a 267-residue protein sequence, read N- to C-terminus: Putative methylsterol monooxygenase DDB_G0270946 (267 aa).

Transmembrane regions (helical) follow at residues 31–51, 72–92, and 110–130; these read FIAH…ADFI, YCAI…MYIF, and IPYL…YFYW. The Fatty acid hydroxylase domain occupies 119–249; it reads SSFIIEDFYF…FTYLDKIFGT (131 aa). A Histidine box-1 motif is present at residues 132–136; it reads HRALH. Positions 145 to 149 match the Histidine box-2 motif; it reads HKVHH. The Histidine box-3 motif lies at 224 to 230; that stretch reads FHDYHHE.

The protein belongs to the sterol desaturase family. Requires Fe cation as cofactor.

Its subcellular location is the endoplasmic reticulum membrane. The catalysed reaction is 4,4-dimethyl-5alpha-cholest-7-en-3beta-ol + 6 Fe(II)-[cytochrome b5] + 3 O2 + 5 H(+) = 4alpha-carboxy-4beta-methyl-5alpha-cholest-7-ene-3beta-ol + 6 Fe(III)-[cytochrome b5] + 4 H2O. Its pathway is steroid biosynthesis; zymosterol biosynthesis; zymosterol from lanosterol: step 3/6. The chain is Putative methylsterol monooxygenase DDB_G0270946 from Dictyostelium discoideum (Social amoeba).